We begin with the raw amino-acid sequence, 440 residues long: Phosphatidylcholine-sterol acyltransferase (440 aa).

Positions 1–24 are cleaved as a signal peptide; that stretch reads MGPPGSPWQWVTLLLGLLLPPAAP. N-linked (GlcNAc...) (complex) asparagine glycosylation occurs at N44. C74 and C98 are joined by a disulfide. N108 is a glycosylation site (N-linked (GlcNAc...) (complex) asparagine). S205 (nucleophile) is an active-site residue. N296 carries an N-linked (GlcNAc...) (complex) asparagine glycan. A disulfide bond links C337 and C380. Active-site charge relay system residues include D369 and H401. N-linked (GlcNAc...) (complex) asparagine glycosylation occurs at N408. O-linked (GalNAc...) threonine glycosylation is present at T431. O-linked (GalNAc...) serine glycosylation occurs at S433.

Belongs to the AB hydrolase superfamily. Lipase family. O- and N-glycosylated. O-glycosylation on Thr-431 and Ser-433 consists of sialylated galactose beta 1--&gt;3N-acetylgalactosamine structures. N-glycosylated sites contain sialylated triantennary and/or biantennary complex structures. As to expression, detected in blood plasma. Detected in cerebral spinal fluid (at protein level). Detected in liver. Expressed mainly in brain, liver and testes.

Its subcellular location is the secreted. The catalysed reaction is a sterol + a 1,2-diacyl-sn-glycero-3-phosphocholine = a sterol ester + a 1-acyl-sn-glycero-3-phosphocholine. It carries out the reaction a 1-O-alkyl-2-acetyl-sn-glycero-3-phosphocholine + H2O = a 1-O-alkyl-sn-glycero-3-phosphocholine + acetate + H(+). It catalyses the reaction a 1-hexadecanoyl-2-acyl-sn-glycero-3-phosphocholine + (24S)-hydroxycholesterol = (24S)-24-hydroxycholesterol ester + 1-hexadecanoyl-sn-glycero-3-phosphocholine. The enzyme catalyses (24S)-hydroxycholesterol + 1-hexadecanoyl-2-(9Z,12Z-octadecadienoyl)-sn-glycero-3-phosphocholine = (24S)-hydroxycholesterol 3-linoleoate + 1-hexadecanoyl-sn-glycero-3-phosphocholine. The catalysed reaction is 1-hexadecanoyl-2-(5Z,8Z,11Z,14Z-eicosatetraenoyl)-sn-glycero-3-phosphocholine + cholesterol = cholesteryl (5Z,8Z,11Z,14Z)-eicosatetraenoate + 1-hexadecanoyl-sn-glycero-3-phosphocholine. It carries out the reaction 1-hexadecanoyl-2-(9Z-octadecenoyl)-sn-glycero-3-phosphocholine + cholesterol = cholesteryl (9Z-octadecenoate) + 1-hexadecanoyl-sn-glycero-3-phosphocholine. It catalyses the reaction 1-hexadecanoyl-2-(8Z,11Z,14Z-eicosatrienoyl)-sn-glycero-3-phosphocholine + cholesterol = cholesteryl (8Z,11Z,14Z)-eicosatrienoate + 1-hexadecanoyl-sn-glycero-3-phosphocholine. The enzyme catalyses 1-hexadecanoyl-2-(5Z,8Z,11Z-eicosatrienoyl)-sn-glycero-3-phosphocholine + cholesterol = cholesteryl (5Z,8Z,11Z)-eicosatrienoate + 1-hexadecanoyl-sn-glycero-3-phosphocholine. The catalysed reaction is 1-hexadecanoyl-2-(5Z,8Z,11Z,14Z,17Z-eicosapentaenoyl)-sn-glycero-3-phosphocholine + cholesterol = (5Z,8Z,11Z,14Z,17Z-eicosapentaenoyl)-cholesterol + 1-hexadecanoyl-sn-glycero-3-phosphocholine. It carries out the reaction 1-hexadecanoyl-2-(9Z,12Z-octadecadienoyl)-sn-glycero-3-phosphocholine + cholesterol = cholesteryl (9Z,12Z)-octadecadienoate + 1-hexadecanoyl-sn-glycero-3-phosphocholine. It catalyses the reaction 1-hexadecanoyl-2-(6Z,9Z,12Z-octadecatrienoyl)-sn-glycero-3-phosphocholine + cholesterol = (6Z,9Z,12Z-octadecatrienoyl)-cholesterol + 1-hexadecanoyl-sn-glycero-3-phosphocholine. The enzyme catalyses 1-hexadecanoyl-2-(11Z,14Z,17Z-eicosatrienoyl)-sn-glycero-3-phosphocholine + cholesterol = (11Z,14Z,17Z-eicosatrienoyl)-cholesterol + 1-hexadecanoyl-sn-glycero-3-phosphocholine. The catalysed reaction is 1-hexadecanoyl-2-(9Z,12Z,15Z-octadecatrienoyl)-sn-glycero-3-phosphocholine + cholesterol = (9Z,12Z,15Z-octadecatrienoyl)-cholesterol + 1-hexadecanoyl-sn-glycero-3-phosphocholine. It carries out the reaction 1-hexadecanoyl-2-(9Z,12Z-octadecadienoyl)-sn-glycero-3-phosphocholine + H2O = (9Z,12Z)-octadecadienoate + 1-hexadecanoyl-sn-glycero-3-phosphocholine + H(+). It catalyses the reaction 1-hexadecanoyl-2-(5Z,8Z,11Z,14Z-eicosatetraenoyl)-sn-glycero-3-phosphocholine + H2O = 1-hexadecanoyl-sn-glycero-3-phosphocholine + (5Z,8Z,11Z,14Z)-eicosatetraenoate + H(+). The enzyme catalyses a 1-O-alkyl-2-acetyl-sn-glycero-3-phosphocholine + 1-hexadecanoyl-sn-glycero-3-phosphocholine = 1-hexadecanoyl-2-acetyl-sn-glycero-3-phosphocholine + a 1-O-alkyl-sn-glycero-3-phosphocholine. Its activity is regulated as follows. APOA1 is the most potent activator in plasma. Also activated by APOE, APOC1 and APOA4. Inhibited by haptoglobin and 5,5'-dithiobis-(2-nitrobenzoic acid) (DTNB). In terms of biological role, central enzyme in the extracellular metabolism of plasma lipoproteins. Synthesized mainly in the liver and secreted into plasma where it converts cholesterol and phosphatidylcholines (lecithins) to cholesteryl esters and lysophosphatidylcholines on the surface of high and low density lipoproteins (HDLs and LDLs). The cholesterol ester is then transported back to the liver. Has a preference for plasma 16:0-18:2 or 18:O-18:2 phosphatidylcholines. Also produced in the brain by primary astrocytes, and esterifies free cholesterol on nascent APOE-containing lipoproteins secreted from glia and influences cerebral spinal fluid (CSF) APOE- and APOA1 levels. Together with APOE and the cholesterol transporter ABCA1, plays a key role in the maturation of glial-derived, nascent lipoproteins. Required for remodeling high-density lipoprotein particles into their spherical forms. Catalyzes the hydrolysis of 1-O-alkyl-2-acetyl-sn-glycero-3-phosphocholine (platelet-activating factor or PAF) to 1-O-alkyl-sn-glycero-3-phosphocholine (lyso-PAF). Also catalyzes the transfer of the acetate group from PAF to 1-hexadecanoyl-sn-glycero-3-phosphocholine forming lyso-PAF. Catalyzes the esterification of (24S)-hydroxycholesterol (24(S)OH-C), also known as cerebrosterol to produce 24(S)OH-C monoesters. The chain is Phosphatidylcholine-sterol acyltransferase (LCAT) from Homo sapiens (Human).